A 429-amino-acid chain; its full sequence is Phosphoribosylamine--glycine ligase (429 aa).

In terms of domain architecture, ATP-grasp spans 108–315 (KDFLARHRIP…LVLLVEAALA (208 aa)). 134 to 195 (LHEQGAPIVI…EEFLDGEEAS (62 aa)) provides a ligand contact to ATP. Residues E285 and N287 each contribute to the Mg(2+) site.

It belongs to the GARS family. It depends on Mg(2+) as a cofactor. Mn(2+) serves as cofactor.

The enzyme catalyses 5-phospho-beta-D-ribosylamine + glycine + ATP = N(1)-(5-phospho-beta-D-ribosyl)glycinamide + ADP + phosphate + H(+). The protein operates within purine metabolism; IMP biosynthesis via de novo pathway; N(1)-(5-phospho-D-ribosyl)glycinamide from 5-phospho-alpha-D-ribose 1-diphosphate: step 2/2. The chain is Phosphoribosylamine--glycine ligase from Pseudomonas aeruginosa (strain ATCC 15692 / DSM 22644 / CIP 104116 / JCM 14847 / LMG 12228 / 1C / PRS 101 / PAO1).